A 1521-amino-acid polypeptide reads, in one-letter code: MDFIDNQAEESDASTGRSDDDEPQSKKMKMAKDKLKKKKKVVASSDEDEDDEDDEEEGRKEMQGFIADEDDEEEDARSEKSDRSRRSEINDELDDEDLDLIDENLDRQGERKKNRVRLGDSSDEDEPIRRSNQDDDDLQSERGSDDGDKRRGHGGRGGGGYDSDSDRSEDDFIEDDGDAPRRHRKRHRGDEHIPEGAEDDARDVFGVEDFNFDEFYDDDDGEEGLEDEEEEIIEDDGEGGEIKIRRKRDTTKKTTLLESIEPSELERGFLSAADKKIMIEDAPERFQLRRTPVTEADDDELEREAQWIMKFAFEETTVTNQAAVDADGKLECLMNIDSSEIEDKRRAVVNAIKAVLHFIRVRSNSFEVPFIGFYRKESIDNLLTMNNLWIVYDYDEKYCHLSEKKRRLYDLMRRMREYQELSDDITAKRRPINEMDLIDINFAETLEQLTDIHANFQLLYGSLLEDMTKWEKERRAADGEETEYRAKFKSSIRNDKYQMCVENGIGELAGRFGLTAKQFAENLDWRKHDIDQDSAFPLEAAEEYICPAFIDRETVLNGAKFMLAKEISRQPLVRSRVRQEFRDNAHFWVKPTKKGRDTIDETHPLFNKRYIKNKPIRNLTDEEFLYYHKAKQDGLIDMVLMYESDEDQAANQFLVKKFLSDSIFRKDEYTDNVEQWNAVRDQCVNMAITEMLVPYMKEEVYNTILEEAKMAVAKKCKKEFASRIARSGYVPEKEKLDEEDEEHSARRRMMAICYSPVRDEASFGVMVDENGAIVDYLRMVHFTKRGHGGGNTGALKEESMELFKKFVQRRRPHAIALNIEDMECTRLKRDLEEAVAELYSQSKIFSQINVYLMDNELAKVYMRSNISIAENPDHPPTLRQAVSLARQLLDPIPEYAHLWNSDEDIFCLSLHPLQRDIDQEILAQLLNHELVNRVNEEGVDINKCAEFPHYTNMLQFTCGLGPRKATSLLKSIKANDNLIESRSKLVVGCKLGPKVFMNCAGFIRIDTRRVSDKTDAYVEVLDGSRVHPETYEWARKMAVDALEVDDSADPTAALQEIMETPERLRDLDLDAFADELNRQGFGEKKATLYDISSELSERYKDLRAPFVEPSGEALYDLLTRSGKEVKVGCKMLGTVQSVQYRKVERDTIDSMIPEHTEEDQYICPSCKIFTAADPQSVREHLLNAGRPGGCVGSACGIRVRLDNGMTAFCPNKFISSSHVDNPLTRVKLNQPYWFKVMAINKEKFSILLSCKSSDLKEDAPAERDDFWDQQQYDDDVAAMKKETTKKKDADTRVKRVIAHPNFHNVSYEAATKMLDEMDWSDCIIRPSANKESGLSVTWKICDRIYHNFFVKESAKDQVFSIGRTLSVGGEDFEDLDELIARFVLPMIQISHEITTHKYFFTQGTSEDTDQVETFVHEKRRELGRSPYVFSASYRQPCQFCISYMFDNSNRIRHEHFKISPRGIRFRQQNFDSLDRMMAWFKRHFNEPPPGIRSSLSYRPTGRTGPPPSAPYQQPPQQQYYR.

A disordered region spans residues 1–204 (MDFIDNQAEE…EGAEDDARDV (204 aa)). Positions 26-41 (KKMKMAKDKLKKKKKV) are enriched in basic residues. The Nuclear localization signal signature appears at 26–42 (KKMKMAKDKLKKKKKVV). Acidic residues-rich tracts occupy residues 45-56 (SDEDEDDEDDEE) and 67-76 (ADEDDEEEDA). Over residues 77–89 (RSEKSDRSRRSEI) the composition is skewed to basic and acidic residues. Positions 90 to 103 (NDELDDEDLDLIDE) are enriched in acidic residues. Basic and acidic residues predominate over residues 127-149 (PIRRSNQDDDDLQSERGSDDGDK). Residues 167–177 (RSEDDFIEDDG) are compositionally biased toward acidic residues. Residues 1182–1251 (LNAGRPGGCV…EKFSILLSCK (70 aa)) enclose the S1 motif domain. The region spanning 1299–1388 (HPNFHNVSYE…IARFVLPMIQ (90 aa)) is the SH2 domain. Residues 1490–1521 (GIRSSLSYRPTGRTGPPPSAPYQQPPQQQYYR) form a disordered region. Residues 1504–1513 (GPPPSAPYQQ) are compositionally biased toward pro residues.

This sequence belongs to the SPT6 family. In terms of assembly, interacts with glp-1 and lin-12.

The protein resides in the nucleus. Histone H3-H4 chaperone that plays a role in maintenance of chromatin structure during RNA polymerase II transcription elongation. May be required for several aspects of morphogenesis of C.briggsae, including regulation of division in the germline and gut and specification of ventral-uterine precursor cell fate. The sequence is that of Suppressor of Ty 6 homolog (emb-5) from Caenorhabditis briggsae.